The following is a 334-amino-acid chain: MRLLSLLTFSLFAVIGLAPAAQAKDKLTIYTYDSFVSEWGPGPKVKENFEKECDCEVNFVASADGVALLNRLKLEGSKTAADIVLGLDTNLTTEARASGFFAPSGIDQTNVKVPGNFKDDIFVPYDYGYFAVVYDSEKLPNPPKSLKELVEGDPAQKIVLQDPRTATPGLGMLLWMKSVYGDEAGAAWQKLQKRVLTVTPGWSEAYGLFTKGEAPMVLSYTTSPAYHMVVEKTNRYKALAYPEGNYLQIELAAQTTTGAKNPLAKKFLAFMTGPGFQDVIPETNWMFPAGKTSKPLPAAFDALPKPEKTLLIPPYEVAKNRRLWVNEWLAATSR.

Residues 1–23 form the signal peptide; that stretch reads MRLLSLLTFSLFAVIGLAPAAQA. Thiamine is bound by residues 64-65, 166-167, W202, and 220-223; these read DG, AT, and YTTS.

It belongs to the bacterial solute-binding protein 1 family. In terms of assembly, the complex is composed of two ATP-binding proteins (ThiQ), two transmembrane proteins (ThiP) and a solute-binding protein (ThiB).

It is found in the periplasm. Its function is as follows. Part of the ABC transporter complex ThiBPQ involved in thiamine import. In Brucella melitensis biotype 1 (strain ATCC 23456 / CCUG 17765 / NCTC 10094 / 16M), this protein is Thiamine-binding periplasmic protein (thiB).